A 591-amino-acid polypeptide reads, in one-letter code: Aspartate--tRNA(Asp/Asn) ligase (591 aa).

Glu-175 is an L-aspartate binding site. Positions 199 to 202 (QQYK) are aspartate. Arg-221 and His-450 together coordinate L-aspartate. 221–223 (RDE) provides a ligand contact to ATP. An ATP-binding site is contributed by Glu-484. Arg-491 serves as a coordination point for L-aspartate. Residue 536-539 (GVDR) participates in ATP binding.

It belongs to the class-II aminoacyl-tRNA synthetase family. Type 1 subfamily. As to quaternary structure, homodimer.

The protein resides in the cytoplasm. It carries out the reaction tRNA(Asx) + L-aspartate + ATP = L-aspartyl-tRNA(Asx) + AMP + diphosphate. Functionally, aspartyl-tRNA synthetase with relaxed tRNA specificity since it is able to aspartylate not only its cognate tRNA(Asp) but also tRNA(Asn). Reaction proceeds in two steps: L-aspartate is first activated by ATP to form Asp-AMP and then transferred to the acceptor end of tRNA(Asp/Asn). The polypeptide is Aspartate--tRNA(Asp/Asn) ligase (Rhodopseudomonas palustris (strain ATCC BAA-98 / CGA009)).